We begin with the raw amino-acid sequence, 531 residues long: Serine-type carboxypeptidase F (531 aa).

The signal sequence occupies residues 1–25 (MLFRSLLSTAVLAVSLCTDNASAAK). N-linked (GlcNAc...) asparagine glycosylation occurs at Asn20. A propeptide spanning residues 26 to 52 (HGRFGQKARDAMNIAKRSANAVKHSLK) is cleaved from the precursor. 3 N-linked (GlcNAc...) asparagine glycosylation sites follow: Asn63, Asn94, and Asn155. Ser211 is a catalytic residue. N-linked (GlcNAc...) asparagine glycans are attached at residues Asn228, Asn271, Asn309, and Asn378. Residue Asp430 is part of the active site. 2 N-linked (GlcNAc...) asparagine glycosylation sites follow: Asn436 and Asn444. His507 is an active-site residue.

Belongs to the peptidase S10 family. Monomer.

Inhibited by DFP, and Hg(Cl)2. Functionally, removes any amino acid from the C-terminus of a long peptide. Digests preferentially peptides containing a positively charged residue in P1' position, as well as arginine, lysine or phenylalanine in P1 position of ester substrate. Also catalyzes peptide synthesis. The chain is Serine-type carboxypeptidase F (pepF) from Aspergillus niger.